A 1479-amino-acid chain; its full sequence is Tyrosine-protein kinase BAZ1B (1479 aa).

Residues 20-126 enclose the WAC domain; that stretch reads EPLFTIPHTQ…GEECDFEVGK (107 aa). The interval 146-212 is disordered; it reads EAVEKKSDGA…TSLKKGERKW (67 aa). Composition is skewed to basic and acidic residues over residues 148–165 and 173–195; these read VEKK…DKEN and LQKK…DRAR. Residues serine 152, serine 158, and serine 161 each carry the phosphoserine modification. Positions 207 to 213 match the C motif motif; it reads KGERKWA. At threonine 266 the chain carries Phosphothreonine. Residues 302–333 form a disordered region; it reads NPSTKRRNTGSPDRKPSKKPKRDSSSLSSPLN. Phosphoserine occurs at positions 325, 330, 345, 361, and 374. Disordered stretches follow at residues 376-433 and 448-472; these read NNNK…KTPK and TQKM…HKHL. A compositionally biased stretch (basic residues) spans 381–396; the sequence is HSFHIPKKGPAAKKPG. Polar residues predominate over residues 415 to 425; the sequence is GQKSTGNSKSP. The segment covering 454–465 has biased composition (low complexity); the sequence is TPRSSGGVPRSS. A coiled-coil region spans residues 537-587; the sequence is ASMSEEQRKEYLKKKRQELKERLREKAKERREREMLERLEKQKRFEDQELG. The region spanning 605 to 669 is the DDT domain; it reads NTLFGDVALV…LQTLLQDEIA (65 aa). Phosphoserine is present on residues serine 706, serine 709, and serine 717. The stretch at 774-809 forms a coiled coil; it reads SAELWKERLAVLKEENDKKRAEKQKRKEMEARNKEN. Residues 789–813 are disordered; the sequence is NDKKRAEKQKRKEMEARNKENGKEE. Residue lysine 827 forms a Glycyl lysine isopeptide (Lys-Gly) (interchain with G-Cter in SUMO1); alternate linkage. Lysine 827 participates in a covalent cross-link: Glycyl lysine isopeptide (Lys-Gly) (interchain with G-Cter in SUMO2); alternate. Glycyl lysine isopeptide (Lys-Gly) (interchain with G-Cter in SUMO2) cross-links involve residues lysine 854, lysine 1043, lysine 1089, and lysine 1107. The stretch at 854–890 forms a coiled coil; it reads KRKREIQERETKVRLEREAEEERMRKHKAAAEKAFQE. A PHD-type zinc finger spans residues 1184–1234; sequence NARCKVCRKKGEDDKLILCDECNKAFHLFCLRPALYEVPDGEWQCPACQPP. Residues 1231-1324 are disordered; sequence CQPPTARRNS…SRPKDDPEVD (94 aa). The span at 1254-1277 shows a compositional bias: acidic residues; sequence SEGDESGEEEEEEEEEEEEEEDYE. Residues 1257–1284 are a coiled coil; sequence DESGEEEEEEEEEEEEEEDYEVAGLRLR. Residues 1305–1316 show a composition bias toward basic residues; the sequence is PGKKSHPARRSR. Position 1315 is a phosphoserine (serine 1315). The residue at position 1331 (lysine 1331) is an N6-acetyllysine. One can recognise a Bromo domain in the interval 1335–1439; sequence RRQSLELQKC…QCLLALLQKH (105 aa). 4 positions are modified to phosphoserine: serine 1338, serine 1464, serine 1466, and serine 1468. The disordered stretch occupies residues 1451 to 1479; the sequence is RKFPDRLADDEGDSDSESVGQSRGRRQKK.

Belongs to the WAL family. BAZ1B subfamily. Component of the WICH-1 ISWI chromatin remodeling complex, at least composed of SMARCA1 and BAZ1B/WSTF, which regulates the spacing of histone octamers on the DNA template to facilitate access to DNA. Within the WICH-1 ISWI chromatin remodeling complex interacts with SMARCA1; the interaction is direct. Component of the WICH-5 ISWI chromatin remodeling complex (also called the WICH complex), at least composed of SMARCA5/SNF2H and BAZ1B/WSTF, which regulates the spacing of histone octamers on the DNA template to facilitate access to DNA. Within the WICH-5 ISWI chromatin remodeling complex interacts with SMARCA5/SNF2H; the interaction is direct. Component of the B-WICH chromatin remodeling complex, at least composed of SMARCA5/SNF2H, BAZ1B/WSTF, SF3B1, DEK, MYO1C, ERCC6, MYBBP1A and DDX21. Within the B-WICH chromatin remodeling complex, interacts with SMARCA5/SNF2H, DDX21, DEK, MYBBP1A, SF3B1 and ERCC6. Interacts with MYO1C. Interacts with PCNA; the interaction is direct and is required for BAZ1B/WSTF binding to replication foci during S phase. Interacts with CDT1. It depends on Mn(2+) as a cofactor.

The protein localises to the nucleus. It catalyses the reaction L-tyrosyl-[protein] + ATP = O-phospho-L-tyrosyl-[protein] + ADP + H(+). In terms of biological role, atypical tyrosine-protein kinase that plays a central role in chromatin remodeling and acts as a transcription regulator. Involved in DNA damage response by phosphorylating 'Tyr-142' of histone H2AX (H2AXY142ph). H2AXY142ph plays a central role in DNA repair and acts as a mark that distinguishes between apoptotic and repair responses to genotoxic stress. Regulatory subunit of the ATP-dependent WICH-1 and WICH-5 ISWI chromatin remodeling complexes, which form ordered nucleosome arrays on chromatin and facilitate access to DNA during DNA-templated processes such as DNA replication, transcription, and repair. Both complexes regulate the spacing of nucleosomes along the chromatin and have the ability to slide mononucleosomes to the center of a DNA template. The WICH-1 ISWI chromatin remodeling complex has a lower ATP hydrolysis rate than the WICH-5 ISWI chromatin remodeling complex. The WICH-5 ISWI chromatin remodeling complex regulates the transcription of various genes, has a role in RNA polymerase I transcription. Within the B-WICH complex has a role in RNA polymerase III transcription. Mediates the recruitment of the WICH-5 ISWI chromatin remodeling complex to replication foci during DNA replication. The protein is Tyrosine-protein kinase BAZ1B (Baz1b) of Mus musculus (Mouse).